The sequence spans 911 residues: Transferrin-binding protein A (911 aa).

The signal sequence occupies residues 1–24 (MQQQHLFRLNILCLSLMTALPAYA). The TonB box signature appears at 38 to 45 (DTIQVKAK). Residues 51–176 (RDNEVTGLGK…LAGSVAFQTK (126 aa)) enclose the TBDR plug domain. Residues 187–911 (QWGIQSKTAY…NYTFSLEMKF (725 aa)) enclose the TBDR beta-barrel domain. The short motif at 894–911 (NRYAAPGRNYTFSLEMKF) is the TonB C-terminal box element.

The protein belongs to the TonB-dependent receptor family. Binds both human apo- and holo-transferrin (TF), via the TF C-terminus. Forms a large complex with TF and TbpB.

The protein localises to the cell outer membrane. Neisseria acquires iron by extracting it from serum transferrin (TF) in its human host. Acts as a TF receptor and is required for TF utilization. Binds both apo- and holo-TF, via the TF C-terminus. This chain is Transferrin-binding protein A, found in Neisseria meningitidis serogroup B.